The chain runs to 122 residues: Large ribosomal subunit protein uL14 (122 aa).

Belongs to the universal ribosomal protein uL14 family. Part of the 50S ribosomal subunit. Forms a cluster with proteins L3 and L19. In the 70S ribosome, L14 and L19 interact and together make contacts with the 16S rRNA in bridges B5 and B8.

Functionally, binds to 23S rRNA. Forms part of two intersubunit bridges in the 70S ribosome. This is Large ribosomal subunit protein uL14 from Acidovorax sp. (strain JS42).